The primary structure comprises 1372 residues: Disease resistance protein RRS1B (1372 aa).

The 136-residue stretch at 2-137 folds into the TIR domain; it reads TESEQIVYIS…ETVRDVYEKL (136 aa). An NB-ARC domain is found at 166–417; it reads VGIWGMPGIG…GCGFFPHVGI (252 aa). 170-177 is an ATP binding site; sequence GMPGIGKT. One copy of the LRR 1 repeat lies at 491–515; that stretch reads PEEIEGMFLDTSNLSFDIKHVAFDN. One copy of the LRR 2; degenerate repeat lies at 528-544; sequence NPEVHHVNNFLKGSLSS. LRR repeat units lie at residues 545 to 568, 570 to 591, 614 to 637, 638 to 658, 659 to 681, 693 to 718, 723 to 747, 749 to 767, 768 to 792, and 798 to 823; these read LPNV…NFDP, HLVE…TKDL, AQNL…TGQL, LHLR…PEIP, PNIE…IVKP, IPGL…KIST, PGKL…VNLE, LKAL…QGFP, RNLK…SLEF, and CVSL…CFDL. A Nuclear localization signal motif is present at residues 950–964; that stretch reads INLHCWALGKAVERD. The WRKY DNA-binding region spans 1174–1240; sequence DRGSRSSDLW…YISEHNHPFP (67 aa). Disordered regions lie at residues 1246-1288 and 1337-1372; these read LAGS…ASPP and QTMF…ILNR. Low complexity predominate over residues 1249–1269; the sequence is STRSSSSKCSDVTTSASSTVS. The span at 1270–1279 shows a compositional bias: basic and acidic residues; the sequence is QDKEGPDKSH. The span at 1337 to 1348 shows a compositional bias: polar residues; sequence QTMFLSRRSSGG.

It belongs to the disease resistance TIR-NB-LRR family. Interacts with RPS4B. RPS4B-RRS1B heterodimer interacts with the bacterial effectors AvrRps4 and PopP2.

Its subcellular location is the nucleus. In terms of biological role, transcription factor. Interacts specifically with the W box (5'-(T)TGAC[CT]-3'), a frequently occurring elicitor-responsive cis-acting element. Also acts as a disease resistance protein that specifically recognizes the AvrRps4 type III effector avirulence protein from P.syringae. Heterodimerization with RPS4B is required to form a functional complex to recognize AvrRps4 and to mediate the hypersensitive response. The sequence is that of Disease resistance protein RRS1B from Arabidopsis thaliana (Mouse-ear cress).